The chain runs to 232 residues: Cytidylate kinase (232 aa).

An ATP-binding site is contributed by 15–23 (GPAGAGKST). Residues 164-192 (KEDPPPISQGQLAAEMKERDMRDSTRADA) form a disordered region. Residues 178-189 (EMKERDMRDSTR) are compositionally biased toward basic and acidic residues.

This sequence belongs to the cytidylate kinase family. Type 1 subfamily.

It localises to the cytoplasm. It catalyses the reaction CMP + ATP = CDP + ADP. The enzyme catalyses dCMP + ATP = dCDP + ADP. The chain is Cytidylate kinase from Solibacter usitatus (strain Ellin6076).